We begin with the raw amino-acid sequence, 142 residues long: Large ribosomal subunit protein uL13 (142 aa).

The protein belongs to the universal ribosomal protein uL13 family. As to quaternary structure, part of the 50S ribosomal subunit.

In terms of biological role, this protein is one of the early assembly proteins of the 50S ribosomal subunit, although it is not seen to bind rRNA by itself. It is important during the early stages of 50S assembly. The protein is Large ribosomal subunit protein uL13 of Treponema pallidum (strain Nichols).